A 277-amino-acid chain; its full sequence is Large ribosomal subunit protein uL2 (277 aa).

Residues 219–277 (TVRGSVMNPNDHPHGGGEGKAPVGRKAPSTPWGKPALGLKTRNKKAKSDKLIVRRRNEK) are disordered. Over residues 264 to 277 (AKSDKLIVRRRNEK) the composition is skewed to basic and acidic residues.

This sequence belongs to the universal ribosomal protein uL2 family. As to quaternary structure, part of the 50S ribosomal subunit. Forms a bridge to the 30S subunit in the 70S ribosome.

One of the primary rRNA binding proteins. Required for association of the 30S and 50S subunits to form the 70S ribosome, for tRNA binding and peptide bond formation. It has been suggested to have peptidyltransferase activity; this is somewhat controversial. Makes several contacts with the 16S rRNA in the 70S ribosome. The polypeptide is Large ribosomal subunit protein uL2 (Streptococcus gordonii (strain Challis / ATCC 35105 / BCRC 15272 / CH1 / DL1 / V288)).